Here is a 233-residue protein sequence, read N- to C-terminus: Ubiquitin carboxyl-terminal hydrolase isozyme L4 (233 aa).

In terms of domain architecture, UCH catalytic spans 5-232 (RWLPLEANPE…LRFNAIALSA (228 aa)). The interaction with ubiquitin stretch occupies residues 8–13 (PLEANP). Residue Cys-95 is the Nucleophile of the active site. Ser-133 carries the post-translational modification Phosphoserine. His-172 (proton donor) is an active-site residue. Residues 222–227 (ELRFNA) form an interaction with ubiquitin region.

This sequence belongs to the peptidase C12 family. As to expression, expressed in various tissues at low level.

Its subcellular location is the cytoplasm. The catalysed reaction is Thiol-dependent hydrolysis of ester, thioester, amide, peptide and isopeptide bonds formed by the C-terminal Gly of ubiquitin (a 76-residue protein attached to proteins as an intracellular targeting signal).. Ubiquitin-protein hydrolase is involved both in the processing of ubiquitin precursors and of ubiquitinated proteins. This enzyme is a thiol protease that recognizes and hydrolyzes a peptide bond at the C-terminal glycine of ubiquitin. In Mus musculus (Mouse), this protein is Ubiquitin carboxyl-terminal hydrolase isozyme L4 (Uchl4).